Reading from the N-terminus, the 1499-residue chain is Pleiotropic ABC efflux transporter of multiple drugs CDR1 (1499 aa).

Over residues 1–11 the composition is skewed to basic and acidic residues; sequence MSLASDKKDAD. The segment at 1-29 is disordered; the sequence is MSLASDKKDADVASTTTTAQDDDNLSTYH. N-linked (GlcNAc...) asparagine glycosylation is found at N24, N96, and N99. In terms of domain architecture, ABC transporter 1 spans 146–399; sequence VYNTVVPSTA…FQKMGYVSPE (254 aa). Position 307 is a phosphoserine (S307). Residue N323 is glycosylated (N-linked (GlcNAc...) asparagine). S484 is modified (phosphoserine). The chain crosses the membrane as a helical span at residues 510 to 530; that stretch reads GVTLFMVIGNSSMAFILGSMF. An N-linked (GlcNAc...) asparagine glycan is attached at N537. The next 5 membrane-spanning stretches (helical) occupy residues 548-568, 597-617, 622-642, 654-674, and 763-783; these read AMFF…FSLF, VPAK…LVNF, GVFF…SHLF, AAMV…GFAI, and GFGI…ILCE. The N-linked (GlcNAc...) asparagine glycan is linked to N813. The 243-residue stretch at 857–1099 folds into the ABC transporter 2 domain; that stretch reads FHWRNLCYDV…TMIDYFESHG (243 aa). An ATP-binding site is contributed by 893-900; sequence GASGAGKT. An N-linked (GlcNAc...) asparagine glycan is attached at N1159. Transmembrane regions (helical) follow at residues 1193 to 1213, 1228 to 1248, and 1278 to 1298; these read YLWS…FTFF, AVFM…PSFV, and IPWN…AIGF. An N-linked (GlcNAc...) asparagine glycan is attached at N1301. The next 2 helical transmembrane spans lie at 1314–1334 and 1342–1362; these read LFWL…LFCI and AAAN…GVLV. Residue N1412 is glycosylated (N-linked (GlcNAc...) asparagine). The helical transmembrane segment at 1466–1486 threads the bilayer; that stretch reads WGIFICYIAFNYIAGIFLYWL.

The protein belongs to the ABC transporter superfamily. Post-translationally, phosphorylated at Ser-307 and Ser-484. Ser-307 and Ser-484 are dephosphorylated on glucose depletion and independently rephosphorylated during glucose exposure or under stress.

The protein localises to the cell membrane. Inhibited by clorgyline. Inhibited by RC21v3, a 4-methoxy-2,3,6-trimethylbenzenesulphonyl derivative of the D-octapeptide D-FFKWQRRR, via the interaction with the ectodomain. FK506, enniatin, milbemycin alpha-11, and milbemycin beta-9 also inhibit CDR1 activity. Inhibited by milbemycin A3/A4 oxim derivatives. Functionally, pleiotropic ABC efflux transporter that transports and confers resistance to structurally and functionally unrelated compounds including rhodamine 6G, Nile red, caspofungin, cycloheximide, or azoles such as fluconazole, itraconazole, ketoconazole, posaconazole, voriconazole, and isavuconazole. Chlorbromuron, itraconazole, yohimbine, ketoconazole, miconazole, clotrimazole, DE-11, tamoxifen, quinidine, verapamil can compete for rhodamine 6G's binding site(s) while compounds such as propanil, chloramphenicol, benomyl, voriconazole, tritylimidazole, ketoconazole, miconazole, tamoxifen, gefitinib shared binding site(s) with fluconazole. Nile red mediated efflux appears to be relatively more specific since only five compounds such as ZW3-12, rhodamine 123, miconazole, clotrimazole, and itraconazole can inhibit its accumulation. Does not use as substrates 4-nitroquinoline 1-oxide (4-NQO) and disulfiram. Does not play a role in the azole resistance in mature biofilms. The sequence is that of Pleiotropic ABC efflux transporter of multiple drugs CDR1 from Candida glabrata (strain ATCC 2001 / BCRC 20586 / JCM 3761 / NBRC 0622 / NRRL Y-65 / CBS 138) (Yeast).